The primary structure comprises 124 residues: Fluoride-specific ion channel FluC (124 aa).

4 helical membrane passes run 5–25, 35–55, 63–83, and 98–118; these read FLQVALGGALGSAARYGVNIL, LGTLSVNIAGCLAMGLLAALL, LAPFLLTGMLGGFTTFSAFAL, and LGYVLGSVVLSLAAVIAGLTV. Na(+)-binding residues include Gly-73 and Thr-76.

It belongs to the fluoride channel Fluc/FEX (TC 1.A.43) family.

The protein resides in the cell inner membrane. It carries out the reaction fluoride(in) = fluoride(out). Its activity is regulated as follows. Na(+) is not transported, but it plays an essential structural role and its presence is essential for fluoride channel function. Its function is as follows. Fluoride-specific ion channel. Important for reducing fluoride concentration in the cell, thus reducing its toxicity. In Paracoccus denitrificans (strain Pd 1222), this protein is Fluoride-specific ion channel FluC.